Consider the following 487-residue polypeptide: Sugar transporter ERD6-like 6 (487 aa).

At Ser-2 the chain carries N-acetylserine. Helical transmembrane passes span 46–66 (ISVLACVLIVALGPIQFGFTC), 89–109 (VFGSLSNVGAMVGAIASGQIA), 115–135 (KGSLMIAAIPNIIGWLCISFA), 146–166 (LLEGFGVGIISYTVPVYIAEI), 178–198 (VNQLSVTIGIMLAYLLGLFVP), 201–221 (ILAVLGILPCTLLIPGLFFIP), 284–304 (LMVGIGLLVLQQLGGINGVLF), 320–340 (AATFGVGAIQVVATAISTWLV), 347–367 (LLLTISSVGMTISLVIVAAAF), 389–409 (VGVVAMVVFFSLGMGPIPWLI), 425–445 (IATLANWFFSWLITMTANLLL), and 451–471 (GTFTLYGLVCAFTVVFVTLWV).

It belongs to the major facilitator superfamily. Sugar transporter (TC 2.A.1.1) family.

Its subcellular location is the membrane. Sugar transporter. The sequence is that of Sugar transporter ERD6-like 6 from Arabidopsis thaliana (Mouse-ear cress).